The sequence spans 475 residues: UDP-glycosyltransferase 101 (475 aa).

Residue histidine 15 is the Proton acceptor of the active site. An an anthocyanidin-binding site is contributed by histidine 15. Catalysis depends on aspartate 117, which acts as the Charge relay. Positions 345, 347, 362, 365, 366, 367, and 370 each coordinate UDP-alpha-D-glucose. An an anthocyanidin-binding site is contributed by glycine 385. 2 residues coordinate UDP-alpha-D-glucose: glutamate 386 and glutamine 387.

This sequence belongs to the UDP-glycosyltransferase family.

The enzyme catalyses (20S)-protopanaxadiol + UDP-alpha-D-glucose = (20S)-ginsenoside C-K + UDP + H(+). It carries out the reaction (20S)-ginsenoside Rg3 + UDP-alpha-D-glucose = (20S)-ginsenoside Rd + UDP + H(+). It catalyses the reaction (20S)-protopanaxatriol + UDP-alpha-D-glucose = (20S)-ginsenoside F1 + UDP + H(+). The catalysed reaction is (20S)-ginsenoside F1 + UDP-alpha-D-glucose = (20S)-ginsenoside Rg1 + UDP + H(+). It participates in secondary metabolite biosynthesis; terpenoid biosynthesis. Component of the dammarane-type triterpene saponins (e.g. ginsenosides or panaxosides) biosynthetic pathway. Glycosyltransferase that catalyzes the biosynthesis of ginsenoside F1 from protopanaxatriol (PPT) and the conversion of ginsenoside F1 to ginsenoside Rg1. Triggers C20-OH glycosylation of ginsenoside Rg3 to produce ginsenoside Rd. Mediates the conversion of protopanaxadiol (PPD) to the ginsenoside compound K. The polypeptide is UDP-glycosyltransferase 101 (Panax ginseng (Korean ginseng)).